Reading from the N-terminus, the 292-residue chain is NAD kinase (292 aa).

The Proton acceptor role is filled by aspartate 73. NAD(+)-binding positions include 73–74 (DG), 147–148 (NE), histidine 158, arginine 175, aspartate 177, 188–193 (TAYSLS), and glutamine 247.

The protein belongs to the NAD kinase family. Requires a divalent metal cation as cofactor.

It is found in the cytoplasm. It catalyses the reaction NAD(+) + ATP = ADP + NADP(+) + H(+). Its function is as follows. Involved in the regulation of the intracellular balance of NAD and NADP, and is a key enzyme in the biosynthesis of NADP. Catalyzes specifically the phosphorylation on 2'-hydroxyl of the adenosine moiety of NAD to yield NADP. This chain is NAD kinase, found in Escherichia coli (strain SMS-3-5 / SECEC).